The chain runs to 280 residues: Eukaryotic translation initiation factor 3 subunit F-1 (280 aa).

Residues 8 to 138 enclose the MPN domain; sequence VRVHPVVLFQ…LRAYVCIQLG (131 aa).

It belongs to the eIF-3 subunit F family. In terms of assembly, component of the eukaryotic translation initiation factor 3 (eIF-3) complex. The eIF-3 complex interacts with pix.

The protein resides in the cytoplasm. Component of the eukaryotic translation initiation factor 3 (eIF-3) complex, which is involved in protein synthesis of a specialized repertoire of mRNAs and, together with other initiation factors, stimulates binding of mRNA and methionyl-tRNAi to the 40S ribosome. The eIF-3 complex specifically targets and initiates translation of a subset of mRNAs involved in cell proliferation. The sequence is that of Eukaryotic translation initiation factor 3 subunit F-1 from Drosophila virilis (Fruit fly).